A 617-amino-acid polypeptide reads, in one-letter code: KIF-binding protein (617 aa).

Residues 48–83 (ALLGPAPEDEDEPAADDGPGDQALGAGEPREAEGPG) are disordered. Residues 54 to 66 (PEDEDEPAADDGP) show a composition bias toward acidic residues. Ser174 carries the phosphoserine modification.

It belongs to the KIF-binding protein family. Interacts with KIF1B; positively regulates KIF1B microtubule motor activity. Interacts with STMN2. As to expression, in the embryo it is expressed in cortical neurons; expression increases during neuronal development.

It localises to the cytoplasm. The protein resides in the cytoskeleton. Its function is as follows. Activator of KIF1B plus-end-directed microtubule motor activity. Required for organization of axonal microtubules, and axonal outgrowth and maintenance during peripheral and central nervous system development. This is KIF-binding protein from Mus musculus (Mouse).